A 126-amino-acid chain; its full sequence is uncharacterized protein (126 aa).

Helical transmembrane passes span 40–57 (IDKWILGALAFVFAVSFF) and 72–94 (ILIAIGIFATFEIAIILAVILGG).

It localises to the cell membrane. This is an uncharacterized protein from Pasteurella multocida (strain Pm70).